Consider the following 526-residue polypeptide: Serine/threonine-protein kinase ppk22 (526 aa).

Disordered regions lie at residues 1–24 and 39–106; these read MARE…QSHF and AATV…PRPL. Positions 10 to 23 are enriched in polar residues; it reads KSPSSTDDGMSQSH. Low complexity predominate over residues 65 to 78; the sequence is NQLNELDLNDSSDQ. Phosphoserine is present on serine 154. Residues 155–445 form the Protein kinase domain; it reads FEKIRLLGQG…ASDIKQHPFF (291 aa). Residues 161–169 and lysine 184 contribute to the ATP site; that span reads LGQGDVGKV. Catalysis depends on aspartate 280, which acts as the Proton acceptor. Residue threonine 339 is modified to Phosphothreonine. Position 341 is a phosphoserine (serine 341). Residue tyrosine 348 is modified to Phosphotyrosine. The AGC-kinase C-terminal domain maps to 446–526; it reads RHIQWALLRS…SVTLHHAGDE (81 aa). Positions 499–526 are disordered; that stretch reads MHSSTPVNEQSNPFDSFSSVTLHHAGDE. Positions 500–519 are enriched in polar residues; sequence HSSTPVNEQSNPFDSFSSVT.

The protein belongs to the protein kinase superfamily. AGC Ser/Thr protein kinase family.

The protein resides in the cytoplasm. It catalyses the reaction L-seryl-[protein] + ATP = O-phospho-L-seryl-[protein] + ADP + H(+). The enzyme catalyses L-threonyl-[protein] + ATP = O-phospho-L-threonyl-[protein] + ADP + H(+). This is Serine/threonine-protein kinase ppk22 (ppk22) from Schizosaccharomyces pombe (strain 972 / ATCC 24843) (Fission yeast).